The following is a 468-amino-acid chain: 3-isopropylmalate dehydratase large subunit (468 aa).

Residues Cys347, Cys407, and Cys410 each coordinate [4Fe-4S] cluster.

The protein belongs to the aconitase/IPM isomerase family. LeuC type 1 subfamily. Heterodimer of LeuC and LeuD. [4Fe-4S] cluster serves as cofactor.

The catalysed reaction is (2R,3S)-3-isopropylmalate = (2S)-2-isopropylmalate. It functions in the pathway amino-acid biosynthesis; L-leucine biosynthesis; L-leucine from 3-methyl-2-oxobutanoate: step 2/4. Catalyzes the isomerization between 2-isopropylmalate and 3-isopropylmalate, via the formation of 2-isopropylmaleate. The chain is 3-isopropylmalate dehydratase large subunit from Prochlorococcus marinus (strain SARG / CCMP1375 / SS120).